We begin with the raw amino-acid sequence, 164 residues long: FMN reductase (NADH) RutF (164 aa).

It belongs to the non-flavoprotein flavin reductase family. RutF subfamily.

The catalysed reaction is FMNH2 + NAD(+) = FMN + NADH + 2 H(+). Functionally, catalyzes the reduction of FMN to FMNH2 which is used to reduce pyrimidine by RutA via the Rut pathway. This chain is FMN reductase (NADH) RutF, found in Escherichia coli (strain K12 / MC4100 / BW2952).